Reading from the N-terminus, the 253-residue chain is Sulfate transporter CysZ (253 aa).

Transmembrane regions (helical) follow at residues 31–51 (FVILPLLVNILLMGGAFWWLF), 75–95 (LLWPLAVISVLLVFGYFFSTI), 151–171 (IVLLILYFIPGIGQTVAPVLW), and 222–242 (IPLLNLFIMPVAVCGATAMWV).

The protein belongs to the CysZ family.

It localises to the cell inner membrane. In terms of biological role, high affinity, high specificity proton-dependent sulfate transporter, which mediates sulfate uptake. Provides the sulfur source for the cysteine synthesis pathway. This is Sulfate transporter CysZ from Escherichia coli O127:H6 (strain E2348/69 / EPEC).